A 749-amino-acid polypeptide reads, in one-letter code: Catalase-peroxidase 2 (749 aa).

A signal peptide spans 1–27 (MFKRTIPLFAAFTLAISPSIFPNYAHA). Positions 107–229 (WHAAGTYRIY…LAATVMGLIY (123 aa)) form a cross-link, tryptophyl-tyrosyl-methioninium (Trp-Tyr) (with M-255). Residue His-108 is the Proton acceptor of the active site. A cross-link (tryptophyl-tyrosyl-methioninium (Tyr-Met) (with W-107)) is located at residues 229-255 (YVNPEGPNGVPDPLAAAEKIRETFGRM). His-270 provides a ligand contact to heme b.

It belongs to the peroxidase family. Peroxidase/catalase subfamily. Homodimer or homotetramer. It depends on heme b as a cofactor. Post-translationally, formation of the three residue Trp-Tyr-Met cross-link is important for the catalase, but not the peroxidase activity of the enzyme.

The catalysed reaction is H2O2 + AH2 = A + 2 H2O. The enzyme catalyses 2 H2O2 = O2 + 2 H2O. Bifunctional enzyme with both catalase and broad-spectrum peroxidase activity. The sequence is that of Catalase-peroxidase 2 from Legionella pneumophila (strain Lens).